A 147-amino-acid chain; its full sequence is MPTYTPKAGDTTRSWYVIDASDVVLGRLASAAATLLRGKHKPTFTPNVDGGDFVIVINADKIAVSGDKLTKKFAYRHSGYPGGLRKRTIGELLEKHPTRVVENAIIGMLPHNKLGRQIQKKLKVYAGPDHPHAAQQPIPFEIKQVAQ.

It belongs to the universal ribosomal protein uL13 family. In terms of assembly, part of the 50S ribosomal subunit.

This protein is one of the early assembly proteins of the 50S ribosomal subunit, although it is not seen to bind rRNA by itself. It is important during the early stages of 50S assembly. This is Large ribosomal subunit protein uL13 from Mycolicibacterium smegmatis (strain ATCC 700084 / mc(2)155) (Mycobacterium smegmatis).